The following is a 231-amino-acid chain: uncharacterized protein (231 aa).

A compositionally biased stretch (basic and acidic residues) spans 1–10 (MDGKKREVEN). A disordered region spans residues 1–35 (MDGKKREVENGKNGNNIKDGNSSNTTNYGKDTKTT). The span at 11-24 (GKNGNNIKDGNSSN) shows a compositional bias: low complexity. The span at 25–35 (TTNYGKDTKTT) shows a compositional bias: polar residues.

This is an uncharacterized protein from Aquifex aeolicus (strain VF5).